The chain runs to 90 residues: Small ribosomal subunit protein uS15 (90 aa).

Belongs to the universal ribosomal protein uS15 family. In terms of assembly, part of the 30S ribosomal subunit. Forms a bridge to the 50S subunit in the 70S ribosome, contacting the 23S rRNA.

Its function is as follows. One of the primary rRNA binding proteins, it binds directly to 16S rRNA where it helps nucleate assembly of the platform of the 30S subunit by binding and bridging several RNA helices of the 16S rRNA. Functionally, forms an intersubunit bridge (bridge B4) with the 23S rRNA of the 50S subunit in the ribosome. This is Small ribosomal subunit protein uS15 from Campylobacter concisus (strain 13826).